We begin with the raw amino-acid sequence, 374 residues long: MPTKLPLELEDEILLRVPPLSLTRFRTVCKRWNTLFNDQRFINNHLACVRPQFILRTEKDSKIYSIGINIDDSLEVRELNLETQGPNKKLKVYRNLFYCDGFLLCPALLDEVAVWNPWLRKQTKWIEPKRSRFNLYGLGYDNRRPEKCYKILGFGYGYSSEINGSYNRINPRVSVFEFETNAWKDLKFGLFDWHLRSPRTVLSLNGTLYWIAVRCESGGDGFIQSFDFSREMFEPFCLLPCKNDFGDTQILEVFRGDRLSVLEQCPTTNKIKIWVTKNKISGDRKELVSWRLLMTVSIPNFPRLQDLYSNSQPSYFMDNNDDKRLIVCTCDESGKPCIYIVKGDRFKKIQMGFEVEPWPFHLVYVPSLVPIPLA.

Positions 1-45 constitute an F-box domain; it reads MPTKLPLELEDEILLRVPPLSLTRFRTVCKRWNTLFNDQRFINNH.

The polypeptide is Putative F-box protein At3g16590 (Arabidopsis thaliana (Mouse-ear cress)).